A 113-amino-acid chain; its full sequence is UPF0482 protein YnfB (113 aa).

Positions 1 to 28 (MKITLSKRIGLLAFLLPCALALSTTVHA) are cleaved as a signal peptide.

This sequence belongs to the UPF0482 family.

This is UPF0482 protein YnfB from Escherichia coli O127:H6 (strain E2348/69 / EPEC).